The following is a 293-amino-acid chain: 3-methyl-2-oxobutanoate hydroxymethyltransferase (293 aa).

The tract at residues 1 to 29 (MTAAHDRSENQPGRPGGETTAPYGSAPRR) is disordered. Mg(2+)-binding residues include Asp73 and Asp112. 3-methyl-2-oxobutanoate is bound by residues 73–74 (DS), Asp112, and Lys142. Residue Glu144 coordinates Mg(2+). Glu210 acts as the Proton acceptor in catalysis.

The protein belongs to the PanB family. As to quaternary structure, homodecamer; pentamer of dimers. It depends on Mg(2+) as a cofactor.

The protein resides in the cytoplasm. It carries out the reaction 3-methyl-2-oxobutanoate + (6R)-5,10-methylene-5,6,7,8-tetrahydrofolate + H2O = 2-dehydropantoate + (6S)-5,6,7,8-tetrahydrofolate. It functions in the pathway cofactor biosynthesis; (R)-pantothenate biosynthesis; (R)-pantoate from 3-methyl-2-oxobutanoate: step 1/2. Functionally, catalyzes the reversible reaction in which hydroxymethyl group from 5,10-methylenetetrahydrofolate is transferred onto alpha-ketoisovalerate to form ketopantoate. This Saccharopolyspora erythraea (strain ATCC 11635 / DSM 40517 / JCM 4748 / NBRC 13426 / NCIMB 8594 / NRRL 2338) protein is 3-methyl-2-oxobutanoate hydroxymethyltransferase.